Reading from the N-terminus, the 145-residue chain is Superoxide dismutase [Mn/Fe] (145 aa).

Positions 10 and 64 each coordinate Fe(3+). Mn(2+)-binding residues include histidine 10 and histidine 64.

This sequence belongs to the iron/manganese superoxide dismutase family. Mn(2+) serves as cofactor. The cofactor is Fe(3+).

The catalysed reaction is 2 superoxide + 2 H(+) = H2O2 + O2. Destroys superoxide anion radicals which are normally produced within the cells and which are toxic to biological systems. Catalyzes the dismutation of superoxide anion radicals into O2 and H2O2 by successive reduction and oxidation of the transition metal ion at the active site. The protein is Superoxide dismutase [Mn/Fe] (sodA) of Streptococcus salivarius.